A 187-amino-acid chain; its full sequence is GTP cyclohydrolase 1 1 (187 aa).

Belongs to the GTP cyclohydrolase I family. Homomer.

It catalyses the reaction GTP + H2O = 7,8-dihydroneopterin 3'-triphosphate + formate + H(+). The protein operates within cofactor biosynthesis; 7,8-dihydroneopterin triphosphate biosynthesis; 7,8-dihydroneopterin triphosphate from GTP: step 1/1. The sequence is that of GTP cyclohydrolase 1 1 from Pseudomonas syringae pv. tomato (strain ATCC BAA-871 / DC3000).